The following is a 582-amino-acid chain: ATP-dependent lipid A-core flippase (582 aa).

Helical transmembrane passes span 16–36, 63–83, 153–173, 253–273, and 275–295; these read LWPT…ALIL, VLVW…ITSY, IIGL…ILIV, PIIQ…ASFP, and VMDN…IALM. The ABC transmembrane type-1 domain maps to 28-310; the sequence is IVAGVALILN…LTNVNAQFQR (283 aa). Residues 342 to 578 enclose the ABC transporter domain; that stretch reads VEFRNVTFTY…RGVYAQLHKM (237 aa). 376–383 contributes to the ATP binding site; the sequence is GRSGSGKS.

Belongs to the ABC transporter superfamily. Lipid exporter (TC 3.A.1.106) family. In terms of assembly, homodimer.

The protein localises to the cell inner membrane. It catalyses the reaction ATP + H2O + lipid A-core oligosaccharideSide 1 = ADP + phosphate + lipid A-core oligosaccharideSide 2.. In terms of biological role, involved in lipopolysaccharide (LPS) biosynthesis. Translocates lipid A-core from the inner to the outer leaflet of the inner membrane. Transmembrane domains (TMD) form a pore in the inner membrane and the ATP-binding domain (NBD) is responsible for energy generation. The protein is ATP-dependent lipid A-core flippase of Shigella flexneri.